Reading from the N-terminus, the 156-residue chain is Putative pre-16S rRNA nuclease (156 aa).

Belongs to the YqgF nuclease family.

The protein resides in the cytoplasm. Could be a nuclease involved in processing of the 5'-end of pre-16S rRNA. This Ehrlichia canis (strain Jake) protein is Putative pre-16S rRNA nuclease.